The following is a 262-amino-acid chain: Phosphatidylserine decarboxylase proenzyme (262 aa).

Active-site charge relay system; for autoendoproteolytic cleavage activity residues include aspartate 86, histidine 142, and serine 226. The active-site Schiff-base intermediate with substrate; via pyruvic acid; for decarboxylase activity is serine 226. Serine 226 is modified (pyruvic acid (Ser); by autocatalysis).

This sequence belongs to the phosphatidylserine decarboxylase family. PSD-B subfamily. Prokaryotic type I sub-subfamily. Heterodimer of a large membrane-associated beta subunit and a small pyruvoyl-containing alpha subunit. Requires pyruvate as cofactor. Is synthesized initially as an inactive proenzyme. Formation of the active enzyme involves a self-maturation process in which the active site pyruvoyl group is generated from an internal serine residue via an autocatalytic post-translational modification. Two non-identical subunits are generated from the proenzyme in this reaction, and the pyruvate is formed at the N-terminus of the alpha chain, which is derived from the carboxyl end of the proenzyme. The autoendoproteolytic cleavage occurs by a canonical serine protease mechanism, in which the side chain hydroxyl group of the serine supplies its oxygen atom to form the C-terminus of the beta chain, while the remainder of the serine residue undergoes an oxidative deamination to produce ammonia and the pyruvoyl prosthetic group on the alpha chain. During this reaction, the Ser that is part of the protease active site of the proenzyme becomes the pyruvoyl prosthetic group, which constitutes an essential element of the active site of the mature decarboxylase.

It localises to the cell membrane. The enzyme catalyses a 1,2-diacyl-sn-glycero-3-phospho-L-serine + H(+) = a 1,2-diacyl-sn-glycero-3-phosphoethanolamine + CO2. Its pathway is phospholipid metabolism; phosphatidylethanolamine biosynthesis; phosphatidylethanolamine from CDP-diacylglycerol: step 2/2. Catalyzes the formation of phosphatidylethanolamine (PtdEtn) from phosphatidylserine (PtdSer). The chain is Phosphatidylserine decarboxylase proenzyme from Bacillus cereus (strain AH820).